A 312-amino-acid chain; its full sequence is Serine protease 48 (312 aa).

The first 22 residues, 1–22 (MGPAGLKVLLLLFLGAFQGSFT), serve as a signal peptide directing secretion. In terms of domain architecture, Peptidase S1 spans 40–276 (IVGGQDAALG…YQKWISAIIS (237 aa)). A disulfide bridge links Cys65 with Cys81. Residues His80 and Asp126 each act as charge relay system in the active site. An N-linked (GlcNAc...) asparagine glycan is attached at Asn149. 3 disulfide bridges follow: Cys160–Cys235, Cys190–Cys214, and Cys225–Cys253. The Charge relay system role is filled by Ser229. Asn263 is a glycosylation site (N-linked (GlcNAc...) asparagine).

The protein belongs to the peptidase S1 family.

Its subcellular location is the secreted. The polypeptide is Serine protease 48 (Prss48) (Mus musculus (Mouse)).